Reading from the N-terminus, the 650-residue chain is Altered inheritance of mitochondria protein 21 (650 aa).

Composition is skewed to polar residues over residues 1 to 10 (MQETQDQLEQ), 31 to 51 (SVPSTPSGSTVGSLITAVGQN), 63 to 74 (TSSASPDGTPST), and 85 to 96 (SDISGVNEQNFE). Disordered stretches follow at residues 1-148 (MQET…EKNA), 197-529 (GLER…PAHI), and 559-650 (PTCS…EESS). Basic and acidic residues predominate over residues 198-217 (LERRTSKPDLETNEIQDAKS). 3 stretches are compositionally biased toward polar residues: residues 242–254 (SCQNLEQSAGTTS), 264–274 (ESQSSGTSQAS), and 282–296 (TNTSIQSSTQETAQA). 2 stretches are compositionally biased toward basic and acidic residues: residues 320 to 335 (QTDEKEMSGEIIKENP) and 368 to 379 (PAKDGEPVDSEK). Over residues 407 to 417 (PNKRPPPKKPS) the composition is skewed to basic residues. Polar residues predominate over residues 444–462 (DSGNSLLSGKRANITNNLN). Low complexity predominate over residues 488–507 (QQTGSDGGSQSSENQTSSQS). Basic residues predominate over residues 515–526 (RRARGPKGRKLP). The span at 562-573 (SEKDSEPLKDIP) shows a compositional bias: basic and acidic residues. The segment covering 578–588 (VSPSNPKSMSE) has biased composition (polar residues). The segment covering 640-650 (GESDANQEESS) has biased composition (acidic residues).

The protein belongs to the AIM21 family.

The protein localises to the cytoplasm. It localises to the cytoskeleton. The protein resides in the actin patch. Involved in mitochondrial migration along actin filaments. The sequence is that of Altered inheritance of mitochondria protein 21 (AIM21) from Lachancea thermotolerans (strain ATCC 56472 / CBS 6340 / NRRL Y-8284) (Yeast).